The following is a 232-amino-acid chain: Putative quercetin 2,3-dioxygenase PA1210 (232 aa).

The a divalent metal cation site is built by His-57, His-59, His-101, and Glu-103.

It belongs to the pirin family. A divalent metal cation serves as cofactor.

The enzyme catalyses quercetin + O2 = 2-(3,4-dihydroxybenzoyloxy)-4,6-dihydroxybenzoate + CO. Its pathway is flavonoid metabolism; quercetin degradation. In terms of biological role, putative quercetin 2,3-dioxygenase. The chain is Putative quercetin 2,3-dioxygenase PA1210 from Pseudomonas aeruginosa (strain ATCC 15692 / DSM 22644 / CIP 104116 / JCM 14847 / LMG 12228 / 1C / PRS 101 / PAO1).